Reading from the N-terminus, the 125-residue chain is Large ribosomal subunit protein bL12 (125 aa).

This sequence belongs to the bacterial ribosomal protein bL12 family. Homodimer. Part of the ribosomal stalk of the 50S ribosomal subunit. Forms a multimeric L10(L12)X complex, where L10 forms an elongated spine to which 2 to 4 L12 dimers bind in a sequential fashion. Binds GTP-bound translation factors.

Its function is as follows. Forms part of the ribosomal stalk which helps the ribosome interact with GTP-bound translation factors. Is thus essential for accurate translation. This is Large ribosomal subunit protein bL12 from Azorhizobium caulinodans (strain ATCC 43989 / DSM 5975 / JCM 20966 / LMG 6465 / NBRC 14845 / NCIMB 13405 / ORS 571).